The chain runs to 638 residues: Phosphomethylpyrimidine synthase (638 aa).

Residues N236, M265, Y294, H330, 350 to 352 (SRG), 391 to 394 (DGLR), and E430 contribute to the substrate site. H434 contributes to the Zn(2+) binding site. A substrate-binding site is contributed by Y457. Zn(2+) is bound at residue H498. C578, C581, and C586 together coordinate [4Fe-4S] cluster.

It belongs to the ThiC family. As to quaternary structure, homodimer. [4Fe-4S] cluster is required as a cofactor.

It catalyses the reaction 5-amino-1-(5-phospho-beta-D-ribosyl)imidazole + S-adenosyl-L-methionine = 4-amino-2-methyl-5-(phosphooxymethyl)pyrimidine + CO + 5'-deoxyadenosine + formate + L-methionine + 3 H(+). It functions in the pathway cofactor biosynthesis; thiamine diphosphate biosynthesis. Functionally, catalyzes the synthesis of the hydroxymethylpyrimidine phosphate (HMP-P) moiety of thiamine from aminoimidazole ribotide (AIR) in a radical S-adenosyl-L-methionine (SAM)-dependent reaction. The sequence is that of Phosphomethylpyrimidine synthase from Polaromonas sp. (strain JS666 / ATCC BAA-500).